Consider the following 138-residue polypeptide: uncharacterized protein (138 aa).

This is an uncharacterized protein from Bacillus subtilis (strain 168).